We begin with the raw amino-acid sequence, 170 residues long: Acetyl-CoA decarbonylase/synthase complex subunit epsilon 2 (170 aa).

The protein belongs to the CdhB family. As to quaternary structure, heterotetramer of two alpha and two epsilon subunits. The ACDS complex is made up of alpha, epsilon, beta, gamma and delta subunits with a probable stoichiometry of (alpha(2)epsilon(2))(4)-beta(8)-(gamma(1)delta(1))(8).

It functions in the pathway one-carbon metabolism; methanogenesis from acetate. Functionally, part of a complex that catalyzes the reversible cleavage of acetyl-CoA, allowing growth on acetate as sole source of carbon and energy. The alpha-epsilon subcomponent functions as a carbon monoxide dehydrogenase. The precise role of the epsilon subunit is unclear; it may have a stabilizing role within the alpha(2)epsilon(2) component and/or be involved in electron transfer to FAD during a potential FAD-mediated CO oxidation. The protein is Acetyl-CoA decarbonylase/synthase complex subunit epsilon 2 (cdhB2) of Methanosarcina mazei (strain ATCC BAA-159 / DSM 3647 / Goe1 / Go1 / JCM 11833 / OCM 88) (Methanosarcina frisia).